A 474-amino-acid chain; its full sequence is UDP-N-acetylmuramate--L-alanine ligase (474 aa).

G116–T122 contacts ATP.

Belongs to the MurCDEF family.

It is found in the cytoplasm. The enzyme catalyses UDP-N-acetyl-alpha-D-muramate + L-alanine + ATP = UDP-N-acetyl-alpha-D-muramoyl-L-alanine + ADP + phosphate + H(+). Its pathway is cell wall biogenesis; peptidoglycan biosynthesis. In terms of biological role, cell wall formation. The sequence is that of UDP-N-acetylmuramate--L-alanine ligase from Hyphomonas neptunium (strain ATCC 15444).